A 355-amino-acid chain; its full sequence is DNA polymerase IV (355 aa).

A UmuC domain is found at 7–188 (IIHIDMDCFY…LPLSKIPGVG (182 aa)). Positions 11 and 106 each coordinate Mg(2+). E107 is a catalytic residue.

It belongs to the DNA polymerase type-Y family. Monomer. The cofactor is Mg(2+).

The protein localises to the cytoplasm. The enzyme catalyses DNA(n) + a 2'-deoxyribonucleoside 5'-triphosphate = DNA(n+1) + diphosphate. Its function is as follows. Poorly processive, error-prone DNA polymerase involved in untargeted mutagenesis. Copies undamaged DNA at stalled replication forks, which arise in vivo from mismatched or misaligned primer ends. These misaligned primers can be extended by PolIV. Exhibits no 3'-5' exonuclease (proofreading) activity. May be involved in translesional synthesis, in conjunction with the beta clamp from PolIII. This Mannheimia succiniciproducens (strain KCTC 0769BP / MBEL55E) protein is DNA polymerase IV.